The chain runs to 1690 residues: DNA-directed RNA polymerase subunit beta' (1690 aa).

Cysteine 63, cysteine 65, cysteine 78, and cysteine 81 together coordinate Zn(2+). The Mg(2+) site is built by aspartate 753, aspartate 755, and aspartate 757. Residues cysteine 1107, cysteine 1295, cysteine 1302, and cysteine 1305 each coordinate Zn(2+).

Belongs to the RNA polymerase beta' chain family. As to quaternary structure, the RNAP catalytic core consists of 2 alpha, 1 beta, 1 beta' and 1 omega subunit. When a sigma factor is associated with the core the holoenzyme is formed, which can initiate transcription. It depends on Mg(2+) as a cofactor. Zn(2+) is required as a cofactor.

It catalyses the reaction RNA(n) + a ribonucleoside 5'-triphosphate = RNA(n+1) + diphosphate. In terms of biological role, DNA-dependent RNA polymerase catalyzes the transcription of DNA into RNA using the four ribonucleoside triphosphates as substrates. The protein is DNA-directed RNA polymerase subunit beta' of Thermotoga neapolitana (strain ATCC 49049 / DSM 4359 / NBRC 107923 / NS-E).